The following is a 188-amino-acid chain: Adenine phosphoribosyltransferase (188 aa).

This sequence belongs to the purine/pyrimidine phosphoribosyltransferase family. In terms of assembly, homodimer.

It localises to the cytoplasm. The catalysed reaction is AMP + diphosphate = 5-phospho-alpha-D-ribose 1-diphosphate + adenine. Its pathway is purine metabolism; AMP biosynthesis via salvage pathway; AMP from adenine: step 1/1. Functionally, catalyzes a salvage reaction resulting in the formation of AMP, that is energically less costly than de novo synthesis. The protein is Adenine phosphoribosyltransferase of Neisseria meningitidis serogroup C (strain 053442).